The primary structure comprises 543 residues: Chaperonin GroEL (543 aa).

ATP contacts are provided by residues 29 to 32 (TLGP), 86 to 90 (DGTTT), Gly413, 478 to 480 (NAA), and Asp494.

It belongs to the chaperonin (HSP60) family. As to quaternary structure, forms a cylinder of 14 subunits composed of two heptameric rings stacked back-to-back. Interacts with the co-chaperonin GroES.

Its subcellular location is the cytoplasm. The enzyme catalyses ATP + H2O + a folded polypeptide = ADP + phosphate + an unfolded polypeptide.. Together with its co-chaperonin GroES, plays an essential role in assisting protein folding. The GroEL-GroES system forms a nano-cage that allows encapsulation of the non-native substrate proteins and provides a physical environment optimized to promote and accelerate protein folding. The sequence is that of Chaperonin GroEL from Lactobacillus gasseri (strain ATCC 33323 / DSM 20243 / BCRC 14619 / CIP 102991 / JCM 1131 / KCTC 3163 / NCIMB 11718 / NCTC 13722 / AM63).